A 512-amino-acid chain; its full sequence is MLLAEVAATSDAVAATRSRLAKRAAIADLLRRAPADDVEIVVAYVAGELRQRRTGLGWRSLRDLPGPAEDPSLEVADVDATFAAMADLAGPGSATARAAAAAELFAAATEREQALLRGLVSGELRQGALDALVLDAVADAAGVPAPEVRRAAMFAGATGPVARAALAAAGPAEAVAALSGFMLTVGRAVRPMLAQSAPDVAAAFAKLPGGDVAVSVDVKLDGIRIQVHKAGDEVRVFTRSLDDITGRVPEIVEAVRALPAGALVLDGEALAVDAGGRPRPFQETASRSATRDADVAAAMTLTPFFFDCLHADGRDLVDAPLRERLEVLDAVAGPHVVTRLTTSDPAAAEEFFAAAVRDGQEGVVVKATDTPYEAGRRGAGWIKVKPRHTLDLVVLAVEWGSGRRRGWLSNIHLGARDPAGGFVMLGKTFKGMTDEMLAWQTERFLELETSRDEWAVHLRPEQVVEIAFDGLQRSTRYPGGLALRFARVLRYRDDKTAAEADTIDTVRTLAGL.

Asp217 lines the ATP pocket. The N6-AMP-lysine intermediate role is filled by Lys219. Positions 224, 239, 268, 306, 377, and 383 each coordinate ATP.

Belongs to the ATP-dependent DNA ligase family. Requires Mg(2+) as cofactor.

It catalyses the reaction ATP + (deoxyribonucleotide)n-3'-hydroxyl + 5'-phospho-(deoxyribonucleotide)m = (deoxyribonucleotide)n+m + AMP + diphosphate.. DNA ligase that seals nicks in double-stranded DNA during DNA replication, DNA recombination and DNA repair. The protein is Probable DNA ligase of Beutenbergia cavernae (strain ATCC BAA-8 / DSM 12333 / CCUG 43141 / JCM 11478 / NBRC 16432 / NCIMB 13614 / HKI 0122).